A 1640-amino-acid polypeptide reads, in one-letter code: Basal body protein 10 (1640 aa).

The tract at residues 11–64 (VLRRKLEALGYSDPLEPASLQLVQKLVEDLVHTTDSYTAVKQQCAKQAQEIAAF) is homodimerization. A coiled-coil region spans residues 93–148 (AERHEREAREHYTAVKRLEDTIAELSYWKHAAAEKLASADKENAGLRKRCEELAKL). The tract at residues 154–185 (SGAATPQSVAPKISSRSPIRVAPPPSPPRPRQ) is disordered. Positions 174–183 (VAPPPSPPRP) are enriched in pro residues. 10 coiled-coil regions span residues 191–232 (LQAA…RDVE), 260–332 (ILQL…LQDT), 370–411 (VERL…AQSR), 461–722 (FAAL…AEAD), 758–960 (ARQM…AQAA), 1010–1030 (GEALREELRAVSEDLEALVRE), 1059–1086 (RASAEQLLRAKEAEAEDLRRVYEALAAE), 1129–1282 (INQY…LQAS), 1323–1494 (AKDQ…AERD), and 1523–1557 (AELASRRLRELQTQVDALEAEKAGLEEATQRTRAT). Over residues 1592-1618 (GQGQVQGPAGTAPAAAAGAPGPQPGQA) the composition is skewed to low complexity. The tract at residues 1592–1640 (GQGQVQGPAGTAPAAAAGAPGPQPGQAQAGGFGGAHGGGSISLSGGPRR) is disordered. Gly residues predominate over residues 1619 to 1631 (QAGGFGGAHGGGS).

The protein belongs to the CEP135/TSGA10 family. In terms of assembly, homodimer.

The protein localises to the cytoplasm. It localises to the cytoskeleton. The protein resides in the microtubule organizing center. It is found in the centrosome. Its subcellular location is the centriole. Its function is as follows. Microtubule-binding protein essential for cytoskeletal organization (e.g. rootlet microtubule bundles) and flagellar basal body/centriole assembly. The protein is Basal body protein 10 of Chlamydomonas reinhardtii (Chlamydomonas smithii).